A 191-amino-acid polypeptide reads, in one-letter code: MLLSDKDIRAEIDAGRVRIDPYDESMVQPSSIDVRLDRYFRVFENHRYPHIDPSVEQADLTRLVEPEGDEPFILHPGEFVLASTYEVISLPDDLASRLEGKSSLGRLGLVTHSTAGFIDPGFSGHVTLELSNLATLPIKLWPGMKIGQLCMFRLSSPAEFPYGSDRYGSRYQGQRGPTASRSFLNFHRTQV.

Residues 101–106 (KSSLGR), aspartate 119, 127–129 (TLE), glutamine 148, tyrosine 162, and glutamine 174 each bind dCTP. Catalysis depends on glutamate 129, which acts as the Proton donor/acceptor.

The protein belongs to the dCTP deaminase family. Homotrimer.

It carries out the reaction dCTP + 2 H2O = dUMP + NH4(+) + diphosphate. Its pathway is pyrimidine metabolism; dUMP biosynthesis; dUMP from dCTP: step 1/1. Its function is as follows. Bifunctional enzyme that catalyzes both the deamination of dCTP to dUTP and the hydrolysis of dUTP to dUMP without releasing the toxic dUTP intermediate. The chain is dCTP deaminase, dUMP-forming from Streptomyces avermitilis (strain ATCC 31267 / DSM 46492 / JCM 5070 / NBRC 14893 / NCIMB 12804 / NRRL 8165 / MA-4680).